The chain runs to 95 residues: Aspartyl/glutamyl-tRNA(Asn/Gln) amidotransferase subunit C (95 aa).

The protein belongs to the GatC family. Heterotrimer of A, B and C subunits.

It carries out the reaction L-glutamyl-tRNA(Gln) + L-glutamine + ATP + H2O = L-glutaminyl-tRNA(Gln) + L-glutamate + ADP + phosphate + H(+). It catalyses the reaction L-aspartyl-tRNA(Asn) + L-glutamine + ATP + H2O = L-asparaginyl-tRNA(Asn) + L-glutamate + ADP + phosphate + 2 H(+). Its function is as follows. Allows the formation of correctly charged Asn-tRNA(Asn) or Gln-tRNA(Gln) through the transamidation of misacylated Asp-tRNA(Asn) or Glu-tRNA(Gln) in organisms which lack either or both of asparaginyl-tRNA or glutaminyl-tRNA synthetases. The reaction takes place in the presence of glutamine and ATP through an activated phospho-Asp-tRNA(Asn) or phospho-Glu-tRNA(Gln). The protein is Aspartyl/glutamyl-tRNA(Asn/Gln) amidotransferase subunit C of Chlorobium chlorochromatii (strain CaD3).